The following is a 177-amino-acid chain: Flavodoxin (177 aa).

Positions 4 to 173 (IGIFFGSDTG…RIDTWLDKLK (170 aa)) constitute a Flavodoxin-like domain.

It belongs to the flavodoxin family. FMN serves as cofactor.

Low-potential electron donor to a number of redox enzymes. NifF is the electron donor to nitrogenase. This Enterobacter agglomerans (Erwinia herbicola) protein is Flavodoxin (nifF).